Consider the following 387-residue polypeptide: Methylthioribose-1-phosphate isomerase (387 aa).

Aspartate 257 acts as the Proton donor in catalysis.

This sequence belongs to the eIF-2B alpha/beta/delta subunits family. MtnA subfamily.

The protein localises to the cytoplasm. The protein resides in the nucleus. It catalyses the reaction 5-(methylsulfanyl)-alpha-D-ribose 1-phosphate = 5-(methylsulfanyl)-D-ribulose 1-phosphate. It participates in amino-acid biosynthesis; L-methionine biosynthesis via salvage pathway; L-methionine from S-methyl-5-thio-alpha-D-ribose 1-phosphate: step 1/6. In terms of biological role, catalyzes the interconversion of methylthioribose-1-phosphate (MTR-1-P) into methylthioribulose-1-phosphate (MTRu-1-P). This chain is Methylthioribose-1-phosphate isomerase (mri1), found in Neosartorya fischeri (strain ATCC 1020 / DSM 3700 / CBS 544.65 / FGSC A1164 / JCM 1740 / NRRL 181 / WB 181) (Aspergillus fischerianus).